We begin with the raw amino-acid sequence, 89 residues long: Small ribosomal subunit protein uS17 (89 aa).

Belongs to the universal ribosomal protein uS17 family. Part of the 30S ribosomal subunit.

Its function is as follows. One of the primary rRNA binding proteins, it binds specifically to the 5'-end of 16S ribosomal RNA. This chain is Small ribosomal subunit protein uS17, found in Albidiferax ferrireducens (strain ATCC BAA-621 / DSM 15236 / T118) (Rhodoferax ferrireducens).